The chain runs to 169 residues: CKLF-like MARVEL transmembrane domain-containing protein 1 (169 aa).

The region spanning 17–135 is the MARVEL domain; sequence NLKQPETAAA…DAFVVTTKMR (119 aa). 4 helical membrane passes run 22-42, 46-66, 79-99, and 110-130; these read ETAA…ITQA, FITI…IYVL, LLDL…AILA, and YVGG…AFVV.

It belongs to the chemokine-like factor family. Highly expressed in testis.

It localises to the membrane. This is CKLF-like MARVEL transmembrane domain-containing protein 1 (CMTM1) from Homo sapiens (Human).